We begin with the raw amino-acid sequence, 130 residues long: uncharacterized protein (130 aa).

Residues 1–62 (MRMYSSDAHE…ASGVGSSCKR (62 aa)) are disordered. Positions 21 to 30 (PPHPLPPTGS) are enriched in pro residues.

This is an uncharacterized protein from Homo sapiens (Human).